A 149-amino-acid polypeptide reads, in one-letter code: Calmodulin (149 aa).

4 EF-hand domains span residues 8-43 (EQIA…LGQN), 44-79 (PTEA…KMKD), 81-116 (DSEE…LGEK), and 117-149 (LTDE…MMSK). Ca(2+) contacts are provided by aspartate 21, aspartate 23, aspartate 25, threonine 27, glutamate 32, aspartate 57, aspartate 59, asparagine 61, threonine 63, glutamate 68, aspartate 94, aspartate 96, asparagine 98, glutamate 105, aspartate 130, aspartate 132, aspartate 134, glutamine 136, and glutamate 141.

This sequence belongs to the calmodulin family.

In terms of biological role, calmodulin mediates the control of a large number of enzymes, ion channels and other proteins by Ca(2+). Among the enzymes to be stimulated by the calmodulin-Ca(2+) complex are a number of protein kinases and phosphatases. In Globisporangium splendens (Leaf rot fungus), this protein is Calmodulin.